Here is an 834-residue protein sequence, read N- to C-terminus: Putative COX1/OXI3 intron 1 protein (834 aa).

The interval 162–188 (MKDTNNTKGNTKSEGSTERGNSGVDRG) is disordered. Polar residues predominate over residues 167–181 (NTKGNTKSEGSTERG). In terms of domain architecture, Reverse transcriptase spans 296-577 (LSNELGTGKF…TPARFLGYNI (282 aa)).

It is found in the mitochondrion. This Saccharomyces cerevisiae (strain ATCC 204508 / S288c) (Baker's yeast) protein is Putative COX1/OXI3 intron 1 protein (AI1).